Consider the following 311-residue polypeptide: Lipoyl synthase (311 aa).

Positions 55, 60, 66, 81, 85, 88, and 292 each coordinate [4Fe-4S] cluster. In terms of domain architecture, Radical SAM core spans 67 to 281; that stretch reads WEDREATFLI…ARFAEGLGFA (215 aa).

This sequence belongs to the radical SAM superfamily. Lipoyl synthase family. [4Fe-4S] cluster serves as cofactor.

Its subcellular location is the cytoplasm. It catalyses the reaction [[Fe-S] cluster scaffold protein carrying a second [4Fe-4S](2+) cluster] + N(6)-octanoyl-L-lysyl-[protein] + 2 oxidized [2Fe-2S]-[ferredoxin] + 2 S-adenosyl-L-methionine + 4 H(+) = [[Fe-S] cluster scaffold protein] + N(6)-[(R)-dihydrolipoyl]-L-lysyl-[protein] + 4 Fe(3+) + 2 hydrogen sulfide + 2 5'-deoxyadenosine + 2 L-methionine + 2 reduced [2Fe-2S]-[ferredoxin]. It functions in the pathway protein modification; protein lipoylation via endogenous pathway; protein N(6)-(lipoyl)lysine from octanoyl-[acyl-carrier-protein]: step 2/2. In terms of biological role, catalyzes the radical-mediated insertion of two sulfur atoms into the C-6 and C-8 positions of the octanoyl moiety bound to the lipoyl domains of lipoate-dependent enzymes, thereby converting the octanoylated domains into lipoylated derivatives. The polypeptide is Lipoyl synthase (Mycobacterium bovis (strain ATCC BAA-935 / AF2122/97)).